The following is a 203-amino-acid chain: NAD(P)H-quinone oxidoreductase subunit M, chloroplastic (203 aa).

The N-terminal 21 residues, 1–21 (MAASSSYMACAKFSMLGWLGG), are a transit peptide targeting the chloroplast. Residues 34 to 48 (SPQEQAEVQESQEVN) are compositionally biased toward low complexity. Positions 34–61 (SPQEQAEVQESQEVNAQEEEKVKQPVQP) are disordered.

This sequence belongs to the NDH complex subunit M family. As to quaternary structure, part of the chloroplast NDH complex, composed of a mixture of chloroplast and nucleus encoded subunits. Component of the NDH subcomplex A, at least composed of ndhH, ndhI, ndhJ, ndhK, ndhL, ndhM, ndhN and ndhO.

The protein localises to the plastid. The protein resides in the chloroplast thylakoid membrane. The enzyme catalyses a plastoquinone + NADH + (n+1) H(+)(in) = a plastoquinol + NAD(+) + n H(+)(out). It catalyses the reaction a plastoquinone + NADPH + (n+1) H(+)(in) = a plastoquinol + NADP(+) + n H(+)(out). Functionally, NDH shuttles electrons from NAD(P)H:plastoquinone, via FMN and iron-sulfur (Fe-S) centers, to quinones in the photosynthetic chain and possibly in a chloroplast respiratory chain. The immediate electron acceptor for the enzyme in this species is believed to be plastoquinone. Couples the redox reaction to proton translocation, and thus conserves the redox energy in a proton gradient. This chain is NAD(P)H-quinone oxidoreductase subunit M, chloroplastic, found in Populus jackii (Balm of Gilead).